We begin with the raw amino-acid sequence, 1048 residues long: Malignant fibrous histiocytoma-amplified sequence 1 homolog (1048 aa).

Ala2 carries the post-translational modification N-acetylalanine. LRR repeat units lie at residues 60-81 (DIEV…LGSA), 84-105 (SLRV…VAEL), 108-129 (HLTE…VVSA), 132-153 (ELRK…LGAL), 155-176 (HLEE…FSCL), 178-199 (HLRT…LLQL), 201-222 (ALEE…ISAL), 224-246 (ALKI…CELA), 247-268 (SLES…FSRL), 270-292 (RLKM…LPLA), 293-314 (GLEE…IAGL), 316-337 (RLLT…IVEL), and 339-360 (GLEE…FGQL). The segment at 60–360 (DIEVLNLGNN…AVLPDNFGQL (301 aa)) is required for interaction with PJA2. A required for interaction with PPP2R2A region spans residues 60–645 (DIEVLNLGNN…DKLLSVAEHR (586 aa)). Residues 399 to 645 (QPAVQPRLKL…DKLLSVAEHR (247 aa)) form the Roc domain. Lys597 is subject to N6-acetyllysine.

In terms of assembly, interacts with RAF1. Interacts with HSPD1. Interacts with PPP2CA; retains PPP2CA into the cytoplasm and excludes it from the nucleus. Interacts with PPP2R2A; the interaction is direct. Interacts with PJA2. In terms of processing, ubiquitinated. Ubiquitination by PJA2 does not lead MFHAS1 to proteasomal degradation but positively regulates its function in polarization of macrophages.

The protein resides in the cytoplasm. Probable GTP-binding protein. Functions in innate immunity and more specifically the inflammatory response as a regulator of the Toll-like receptor TLR2 and TLR4 signaling pathways. Negatively regulates the part of the TLR4 signaling pathway that leads to the activation of the transcription factor AP-1. By retaining the phosphatase complex PP2A into the cytoplasm, prevents the dephosphorylation of the AP-1 subunit JUN which is required for proper activation of the transcription factor. Both inhibits and activates the TLR2-dependent signaling pathway. Positively regulates the TLR2 signaling pathway to activate specifically the downstream p38 and JNK MAP kinases and promote the polarization of macrophages toward the pro-inflammatory M1 phenotype. It may also play a role in the regulation of inflammation induced by high glucose through the PKB/AKT signaling pathway. Also involved in erythrocyte differentiation through activation of the ERK1/ERK2 signaling pathway. The chain is Malignant fibrous histiocytoma-amplified sequence 1 homolog from Mus musculus (Mouse).